The sequence spans 274 residues: Phosphate import ATP-binding protein PstB (274 aa).

The span at 1-11 (MSEISIATSVP) shows a compositional bias: polar residues. A disordered region spans residues 1-21 (MSEISIATSVPSGPGPLIGNQ). Positions 28–269 (VIVRDLNFYY…PNDRRTQDYI (242 aa)) constitute an ABC transporter domain. Residue 60–67 (GPSGCGKS) coordinates ATP.

The protein belongs to the ABC transporter superfamily. Phosphate importer (TC 3.A.1.7) family. The complex is composed of two ATP-binding proteins (PstB), two transmembrane proteins (PstC and PstA) and a solute-binding protein (PstS).

Its subcellular location is the cell inner membrane. It carries out the reaction phosphate(out) + ATP + H2O = ADP + 2 phosphate(in) + H(+). Its function is as follows. Part of the ABC transporter complex PstSACB involved in phosphate import. Responsible for energy coupling to the transport system. The sequence is that of Phosphate import ATP-binding protein PstB from Rhodopseudomonas palustris (strain BisB5).